A 386-amino-acid chain; its full sequence is Palmitoyltransferase ZDHHC18 (386 aa).

Positions 1–65 (MKDCEYQQIS…GSGSLGRRPR (65 aa)) are disordered. The Cytoplasmic portion of the chain corresponds to 1–88 (MKDCEYQQIS…CGGRLMLAGH (88 aa)). A Phosphoserine modification is found at Ser19. The span at 27 to 40 (PAAPPGPSPGPAPG) shows a compositional bias: pro residues. Residues 49–59 (SGSGSGSGSGS) are compositionally biased toward gly residues. The helical transmembrane segment at 89–109 (GGVFALTLLLILSTTILFFIF) threads the bilayer. Residues 110-117 (DCPYLART) lie on the Lumenal side of the membrane. A helical transmembrane segment spans residues 118-138 (LTLAIPIIAAILFFFVMSCLL). Residues 139–233 (QTSFTDPGIL…GNCVGRRNYR (95 aa)) are Cytoplasmic-facing. Residues 190 to 240 (KYCFTCKMFRPPRTSHCSVCDNCVERFDHHCPWVGNCVGRRNYRFFYAFIL) form the DHHC domain. Cys220 serves as the catalytic S-palmitoyl cysteine intermediate. Residues 234-254 (FFYAFILSLSFLTAFIFACVV) traverse the membrane as a helical segment. Topologically, residues 255-275 (THLTLLSQGSNFLSALNKTPA) are lumenal. The chain crosses the membrane as a helical span at residues 276–296 (GVLELVICFFSIWSILGLSGF). Residues 297 to 386 (HTYLVASNLT…PDASMVGGHP (90 aa)) are Cytoplasmic-facing. Residues 362–386 (LPSPIRSDEPACGAKPDASMVGGHP) form a disordered region.

The protein belongs to the DHHC palmitoyltransferase family. ERF2/ZDHHC9 subfamily.

It is found in the golgi apparatus membrane. It catalyses the reaction L-cysteinyl-[protein] + hexadecanoyl-CoA = S-hexadecanoyl-L-cysteinyl-[protein] + CoA. In terms of biological role, palmitoyltransferase that catalyzes the addition of palmitate onto various protein substrates, such as CGAS, HRAS and LCK. Acts as a negative regulator of the cGAS-STING pathway be mediating palmitoylation and inactivation of CGAS. May also have a palmitoyltransferase activity toward the beta-2 adrenergic receptor/ADRB2 and therefore regulate G protein-coupled receptor signaling. The protein is Palmitoyltransferase ZDHHC18 of Rattus norvegicus (Rat).